Here is a 709-residue protein sequence, read N- to C-terminus: Elongation factor G (709 aa).

The tr-type G domain occupies 9–296 (AKVRNIGIMA…AVVRYLPSPL (288 aa)). Residues 18–25 (AHIDAGKT), 86–90 (DTPGH), and 140–143 (NKLD) contribute to the GTP site.

This sequence belongs to the TRAFAC class translation factor GTPase superfamily. Classic translation factor GTPase family. EF-G/EF-2 subfamily.

Its subcellular location is the cytoplasm. In terms of biological role, catalyzes the GTP-dependent ribosomal translocation step during translation elongation. During this step, the ribosome changes from the pre-translocational (PRE) to the post-translocational (POST) state as the newly formed A-site-bound peptidyl-tRNA and P-site-bound deacylated tRNA move to the P and E sites, respectively. Catalyzes the coordinated movement of the two tRNA molecules, the mRNA and conformational changes in the ribosome. In Streptomyces griseus subsp. griseus (strain JCM 4626 / CBS 651.72 / NBRC 13350 / KCC S-0626 / ISP 5235), this protein is Elongation factor G.